Reading from the N-terminus, the 177-residue chain is MSRIGKKPVPLPKGVTASISGQTVEVKGPKGTRTFSATDDVTIALEEGTVKVTPRGTSKRARQQWGMVRSQVENLVTGVTAGFKKELEITGVGYRAQMAGNVLKLSLGYSHDVNFEVPAGVTVTTPKQTEITVEGIDQQLVGQVAANIREWRRPEPYKGKGIRYKDEFIFRKEGKKK.

The protein belongs to the universal ribosomal protein uL6 family. Part of the 50S ribosomal subunit.

Its function is as follows. This protein binds to the 23S rRNA, and is important in its secondary structure. It is located near the subunit interface in the base of the L7/L12 stalk, and near the tRNA binding site of the peptidyltransferase center. This Cereibacter sphaeroides (strain ATCC 17025 / ATH 2.4.3) (Rhodobacter sphaeroides) protein is Large ribosomal subunit protein uL6.